Reading from the N-terminus, the 431-residue chain is Enolase (431 aa).

A (2R)-2-phosphoglycerate-binding site is contributed by Gln163. Residue Glu205 is the Proton donor of the active site. Mg(2+)-binding residues include Asp242, Glu288, and Asp315. Positions 340, 369, 370, and 391 each coordinate (2R)-2-phosphoglycerate. The Proton acceptor role is filled by Lys340.

This sequence belongs to the enolase family. Mg(2+) is required as a cofactor.

The protein localises to the cytoplasm. Its subcellular location is the secreted. The protein resides in the cell surface. It catalyses the reaction (2R)-2-phosphoglycerate = phosphoenolpyruvate + H2O. Its pathway is carbohydrate degradation; glycolysis; pyruvate from D-glyceraldehyde 3-phosphate: step 4/5. Catalyzes the reversible conversion of 2-phosphoglycerate (2-PG) into phosphoenolpyruvate (PEP). It is essential for the degradation of carbohydrates via glycolysis. The protein is Enolase of Acholeplasma laidlawii (strain PG-8A).